The sequence spans 422 residues: MDFWLWLLYFLPVSGALRVLPEVQLNVEWGGSIIIECPLPQLHVRMYLCRQMAKPGICSTVVSNTFVKKEYERRVTLTPCLDKKLFLVEMTQLTENDDGIYACGVGMKTDKGKTQKITLNVHNEYPEPFWEDEWTSERPRWLHRFLQHQMPWLHGSEHPSSSGVIAKVTTPAPKTEAPPVHQPSSITSVTQHPRVYRAFSVSATKSPALLPATTASKTSTQQAIRPLEASYSHHTRLHEQRTRHHGPHYGREDRGLHIPIPEFHILIPTFLGFLLLVLLGLVVKRAIQRRRASSRRAGRLAMRRRGRGASRPFPTQRRDASQRPRSQNNVYSACPRRARGPDSLGPAEAPLLNAPASASPASPQVLEAPWPHTPSLKMSCEYVSLGYQPAVNLEDPDSDDYINIPDPSHLPSYAPGPRSSCP.

A signal peptide spans 1 to 16 (MDFWLWLLYFLPVSGA). Residues 18 to 262 (RVLPEVQLNV…DRGLHIPIPE (245 aa)) lie on the Extracellular side of the membrane. The Ig-like domain maps to 24–121 (QLNVEWGGSI…GKTQKITLNV (98 aa)). 2 disulfide bridges follow: C37-C103 and C49-C58. The residue at position 91 (T91) is a Phosphothreonine. Residues 263-283 (FHILIPTFLGFLLLVLLGLVV) traverse the membrane as a helical segment. Topologically, residues 284 to 422 (KRAIQRRRAS…YAPGPRSSCP (139 aa)) are cytoplasmic. Basic residues predominate over residues 290-308 (RRASSRRAGRLAMRRRGRG). 2 disordered regions span residues 290-367 (RRAS…QVLE) and 391-422 (VNLEDPDSDDYINIPDPSHLPSYAPGPRSSCP). Over residues 344 to 363 (LGPAEAPLLNAPASASPASP) the composition is skewed to low complexity.

In terms of assembly, interacts (via Ig-like domain) with IGHM (via CH4/Cmu4 domain), both secreted and membrane-bound IgM; the interaction is glycan-independent and multivalent theoretically involving up to eight binding sites for the IgM pentamer. In terms of processing, phosphorylated on both Tyr and Ser residues. Post-translationally, O-glycosylated. Sialylated. O-linked glycans regulate trafficking to the plasma membrane. As to expression, expressed in pre-B cells, immature and mature B cells residing in primary and secondary lymphoid organs (at protein level). In the spleen, highly expressed in follicular and marginal zone B cells and at lower levels in germinal center B cells and plasma cells. Expressed in splenic dendritic cells and in granulocytes. In the peritoneum, expressed in B1-a and B-2 cell lineages. In the bone marrow, expressed in immature B cells and at a lower level in pro- and pre-B cells (at protein level). Expressed in M cells (at protein level).

Its subcellular location is the cell membrane. It is found in the early endosome membrane. The protein resides in the golgi apparatus. The protein localises to the trans-Golgi network membrane. It localises to the lysosome membrane. High-affinity Fc receptor for immunoglobulin M (IgM), both secreted and membrane-bound IgM. Primarily regulates IgM transport and homeostasis. In lymphoid cells, enables exocytosis of membrane-bound IgM on the plasma membrane as well as endocytosis of IgM-antigen complexes toward lysosomes for degradation. In mucosal epithelium, mediates retrotranscytosis of antigen-IgM complexes across mucosal M cells toward antigen-presenting cells in mucosal lymphoid tissues. Triggers costimulatory signaling and mediates most of IgM effector functions involved in B cell development and primary immune response to infection. Likely limits tonic IgM BCR signaling to self-antigens for proper negative selection of autoreactive B cells in the bone marrow and for the maintenance of regulatory B cell pool in peripheral lymphoid organs. Mediates antibody responses to T cell-dependent and T cell-independent antigens and promotes induction of an efficient neutralizing IgG response. Engages in cross-talk with antigen-receptor signaling via the non-canonical NF-kappa-B, MAP kinases and calcium signaling pathways. This is Immunoglobulin mu Fc receptor from Mus musculus (Mouse).